We begin with the raw amino-acid sequence, 429 residues long: Nicotinate phosphoribosyltransferase (429 aa).

Residues Tyr15, Phe177, and Thr229 each coordinate nicotinate. His232 carries the post-translational modification Phosphohistidine; by autocatalysis. Arg294 is a nicotinate binding site. Position 355 (Thr355) interacts with 5-phospho-alpha-D-ribose 1-diphosphate.

The protein belongs to the NAPRTase family. Post-translationally, transiently phosphorylated on a His residue during the reaction cycle. Phosphorylation strongly increases the affinity for substrates and increases the rate of nicotinate D-ribonucleotide production. Dephosphorylation regenerates the low-affinity form of the enzyme, leading to product release.

Its subcellular location is the cytoplasm. The protein localises to the nucleus. It catalyses the reaction nicotinate + 5-phospho-alpha-D-ribose 1-diphosphate + ATP + H2O = nicotinate beta-D-ribonucleotide + ADP + phosphate + diphosphate. Its pathway is cofactor biosynthesis; NAD(+) biosynthesis; nicotinate D-ribonucleotide from nicotinate: step 1/1. Catalyzes the first step in the biosynthesis of NAD from nicotinic acid, the ATP-dependent synthesis of beta-nicotinate D-ribonucleotide from nicotinate and 5-phospho-D-ribose 1-phosphate. Essential for growth under anaerobic conditions. This is Nicotinate phosphoribosyltransferase (NPT1) from Saccharomyces cerevisiae (strain ATCC 204508 / S288c) (Baker's yeast).